We begin with the raw amino-acid sequence, 753 residues long: Replication restart protein PriA (753 aa).

The region spanning 228–395 (SLVAEQFQTC…LSKKYTLSVL (168 aa)) is the Helicase ATP-binding domain. 241-248 (GVTGSGKT) serves as a coordination point for ATP. The short motif at 337–340 (DEEH) is the DEAH box element. Zn(2+)-binding residues include Cys-458, Cys-461, Cys-467, Cys-470, Cys-485, Cys-488, Cys-499, and Cys-502. In terms of domain architecture, Helicase C-terminal spans 491-646 (RLSKPITSCP…DFPAFYKEEI (156 aa)).

It belongs to the helicase family. PriA subfamily. As to quaternary structure, component of the replication restart primosome. Requires Zn(2+) as cofactor.

It carries out the reaction Couples ATP hydrolysis with the unwinding of duplex DNA by translocating in the 3'-5' direction.. The enzyme catalyses ATP + H2O = ADP + phosphate + H(+). Initiates the restart of stalled replication forks, which reloads the replicative helicase on sites other than the origin of replication. Recognizes and binds to abandoned replication forks and remodels them to uncover a helicase loading site. Promotes assembly of the primosome at these replication forks. In Chlamydia trachomatis serovar D (strain ATCC VR-885 / DSM 19411 / UW-3/Cx), this protein is Replication restart protein PriA.